A 270-amino-acid polypeptide reads, in one-letter code: MSSNELVEQIMAQVIARVATPEQQAIPGQPQPIRETAMAEKSCSLTEFVGTAIGDTLGLVIANVDTALLDAMKLEKRYRSIGILGARTGAGPHIMAADEAVKATNTEVVSIELPRDTKGGAGHGSLIILGGNDVSDVKRGIEVALKELDRTFGDVYGNEAGHIELQYTARASYALEKAFGAPIGRACGIIVGAPASVGVLMADTALKSANVEVVAYSSPAHGTSFSNEAILVISGDSGAVRQAVTSAREIGKTVLATLGSEPKNDRPSYI.

The interval 6 to 18 (LVEQIMAQVIARV) is probable helix that binds cargo to the BMC shell. 2 consecutive BMC circularly permuted domains span residues 47–152 (EFVG…DRTF) and 154–258 (DVYG…LATL).

The protein belongs to the EutL/PduB family. As to quaternary structure, homotrimerizes to form a pseudohexamer with a central pore. The trimers pack into an array. Post-translationally, in purified BMCs seen as a 28.0 kDa and 25.0 kDa form, both of which have been N-terminally sequenced and whose N-fMet is removed; the smaller form is called PduB'.

It localises to the bacterial microcompartment. It participates in polyol metabolism; 1,2-propanediol degradation. Its function is as follows. The two proteins produced are among the major shell proteins of the bacterial microcompartment (BMC) dedicated to 1,2-propanediol (1,2-PD) degradation. Required for structural integrity of BMCs and to mitigate propionaldehyde toxicity. The N-terminal 13 residues are important for correct assembly of the BMC shell. The isolated BMC shell component protein ratio for J:A:B':B:K:T:U is approximately 15:10:7:6:1:1:2. The N-terminus of the long form (PduB) is required for correct formation of BMCs, deletions in the first 37 residues have substantially reduced levels of the major lumen enzymes. May play a major role in binding the enzyme contents to the shell. In terms of biological role, the 1,2-PD-specific bacterial microcompartment (BMC) concentrates low levels of 1,2-PD catabolic enzymes, concentrates volatile reaction intermediates thus enhancing pathway flux and keeps the level of toxic, mutagenic propionaldehyde low. This is Bacterial microcompartment shell protein PduB from Salmonella typhimurium (strain LT2 / SGSC1412 / ATCC 700720).